The sequence spans 447 residues: MNRHFNATRKIDPSRGATLGDGSPNDMNRVEIGPTQLAFAEWHTARLDLPDLAAMRRFRHRRLTDHVVARGYAGLLMFDPLNIRYATDSTNMQLWNTHNPFRATLLCADGYMVMWDYKNSPFLSEFNPLVREQRAGADLFYFDRGDKVDVAADVFANEVRILLRDHAPGLRRLAVDKVMLHGLRALQAQGFEIMDGEEVTEKARSVKGPDEIRAMRCASHACEVAVRKMEDFARSKVGDGVTCENDIWAILHSENVRRGGEWIETRLLASGPRSNPWFQECGPRVCQRNEIISFDTDLVGAYGICTDISRSWWIGDQKPRADMIYAMQHGVEHIRTNMEMLKPGVMIPELSANTHVLDAKFQKQKYGCLMHGVGLCDEWPLVAYPDHAVAGAYDYPLEPGMTLCVEALISEEGGDFSIKLEDQVLITEDGYENLTKYPFDPALMGVE.

The segment at methionine 1–aspartate 26 is disordered. Aspartate 295, aspartate 297, aspartate 307, histidine 371, glutamate 406, and glutamate 421 together coordinate a divalent metal cation.

Belongs to the peptidase M24B family. As to quaternary structure, homodimer. A divalent metal cation serves as cofactor.

It catalyses the reaction S,S-dimethyl-beta-propiothetin = acrylate + dimethyl sulfide + H(+). In terms of biological role, able to cleave dimethylsulfoniopropionate (DMSP), releasing dimethyl sulfide (DMS). DMS is the principal form by which sulfur is transported from oceans to the atmosphere. The real activity of the protein is however subject to debate and it is unclear whether it constitutes a real dimethylsulfoniopropionate lyase in vivo: the low activity with DMSP as substrate suggests that DMSP is not its native substrate. In Roseobacter denitrificans (strain ATCC 33942 / OCh 114) (Erythrobacter sp. (strain OCh 114)), this protein is Dimethylsulfoniopropionate lyase DddP.